Reading from the N-terminus, the 120-residue chain is UPF0231 protein YacL (120 aa).

The protein belongs to the UPF0231 family.

The polypeptide is UPF0231 protein YacL (Salmonella paratyphi A (strain ATCC 9150 / SARB42)).